The following is a 480-amino-acid chain: Glutamate--tRNA ligase (480 aa).

A 'HIGH' region motif is present at residues 9–19; that stretch reads PSPTGNLHIGT. The 'KMSKS' region motif lies at 247-251; it reads KLSKR. Lys250 lines the ATP pocket.

The protein belongs to the class-I aminoacyl-tRNA synthetase family. Glutamate--tRNA ligase type 1 subfamily. As to quaternary structure, monomer.

It localises to the cytoplasm. It catalyses the reaction tRNA(Glu) + L-glutamate + ATP = L-glutamyl-tRNA(Glu) + AMP + diphosphate. In terms of biological role, catalyzes the attachment of glutamate to tRNA(Glu) in a two-step reaction: glutamate is first activated by ATP to form Glu-AMP and then transferred to the acceptor end of tRNA(Glu). This chain is Glutamate--tRNA ligase, found in Nostoc sp. (strain PCC 7120 / SAG 25.82 / UTEX 2576).